Here is a 421-residue protein sequence, read N- to C-terminus: Serine hydroxymethyltransferase (421 aa).

(6S)-5,6,7,8-tetrahydrofolate-binding positions include Leu-121 and 125–127; that span reads GHL. At Lys-230 the chain carries N6-(pyridoxal phosphate)lysine. Residue 355 to 357 coordinates (6S)-5,6,7,8-tetrahydrofolate; sequence SPF.

Belongs to the SHMT family. As to quaternary structure, homodimer. Pyridoxal 5'-phosphate serves as cofactor.

It is found in the cytoplasm. The catalysed reaction is (6R)-5,10-methylene-5,6,7,8-tetrahydrofolate + glycine + H2O = (6S)-5,6,7,8-tetrahydrofolate + L-serine. It functions in the pathway one-carbon metabolism; tetrahydrofolate interconversion. Its pathway is amino-acid biosynthesis; glycine biosynthesis; glycine from L-serine: step 1/1. Catalyzes the reversible interconversion of serine and glycine with tetrahydrofolate (THF) serving as the one-carbon carrier. This reaction serves as the major source of one-carbon groups required for the biosynthesis of purines, thymidylate, methionine, and other important biomolecules. Also exhibits THF-independent aldolase activity toward beta-hydroxyamino acids, producing glycine and aldehydes, via a retro-aldol mechanism. This Cellvibrio japonicus (strain Ueda107) (Pseudomonas fluorescens subsp. cellulosa) protein is Serine hydroxymethyltransferase.